Here is a 350-residue protein sequence, read N- to C-terminus: Ferredoxin--NADP reductase (350 aa).

The FAD site is built by T25, E44, Q52, Y57, V97, F132, D298, and S339.

It belongs to the ferredoxin--NADP reductase type 2 family. As to quaternary structure, homodimer. FAD serves as cofactor.

It catalyses the reaction 2 reduced [2Fe-2S]-[ferredoxin] + NADP(+) + H(+) = 2 oxidized [2Fe-2S]-[ferredoxin] + NADPH. In Chlorobium limicola (strain DSM 245 / NBRC 103803 / 6330), this protein is Ferredoxin--NADP reductase.